Here is a 372-residue protein sequence, read N- to C-terminus: MQTISGVLPTVLSPSELRSDDERTFQFDEEAEITTHLTESEDLRRLINETAQLGVRVDHIHDKTDQEIARLEKVIKEVTESDTFFRSCSGWFKTNKNFSDSESSSNTQLKSLSQLHGRYDRDWRQRLNKWFRKNKSKLALPSDNNLEEVNDDKVYGYGEDLMERGKTPYFSDIDDFMNGLNIISPLTPDDFENDDTLVKIDETCQIHSASEPEKTSISPTFGKNIKKELVTDDTESIISGPPLQENKKTLLKYRYVRTSLDMLGSEKSSSKNNSGGMFRIFHKSANFGDKNQENVPRVWDTLRNNLGREIYLLQGRFKKWTTKHQNLKKGQPCKDEDAVTVPLPSSDPGKETQLETKLCFVPEPGDQPLVQA.

The disordered stretch occupies residues 328–353; that stretch reads KKGQPCKDEDAVTVPLPSSDPGKETQ.

Its function is as follows. Induces the SOS system when expressed in E.coli, therefore, it may play a role in DNA metabolism and/or in genome stability. This is an uncharacterized protein from Saccharomyces cerevisiae (strain ATCC 204508 / S288c) (Baker's yeast).